We begin with the raw amino-acid sequence, 340 residues long: Glyceraldehyde-3-phosphate dehydrogenase (340 aa).

NAD(+) contacts are provided by residues 11–12 (SI) and Gly111. Position 140–142 (140–142 (SCN)) interacts with D-glyceraldehyde 3-phosphate. Cys141 serves as the catalytic Nucleophile. NAD(+) is bound at residue Arg169. 195–196 (HG) is a D-glyceraldehyde 3-phosphate binding site. Position 303 (Gln303) interacts with NAD(+).

The protein belongs to the glyceraldehyde-3-phosphate dehydrogenase family. In terms of assembly, homotetramer.

It is found in the cytoplasm. The enzyme catalyses D-glyceraldehyde 3-phosphate + phosphate + NADP(+) = (2R)-3-phospho-glyceroyl phosphate + NADPH + H(+). The catalysed reaction is D-glyceraldehyde 3-phosphate + phosphate + NAD(+) = (2R)-3-phospho-glyceroyl phosphate + NADH + H(+). It functions in the pathway carbohydrate degradation; glycolysis; pyruvate from D-glyceraldehyde 3-phosphate: step 1/5. This chain is Glyceraldehyde-3-phosphate dehydrogenase, found in Methanococcus maripaludis (strain C7 / ATCC BAA-1331).